A 429-amino-acid chain; its full sequence is 3-phosphoshikimate 1-carboxyvinyltransferase (429 aa).

The 3-phosphoshikimate site is built by K23, S24, and R28. K23 lines the phosphoenolpyruvate pocket. Residues G95 and R123 each contribute to the phosphoenolpyruvate site. Residues S168, Q170, D316, and K343 each coordinate 3-phosphoshikimate. Residue Q170 participates in phosphoenolpyruvate binding. D316 functions as the Proton acceptor in the catalytic mechanism. Phosphoenolpyruvate contacts are provided by R347 and R389.

This sequence belongs to the EPSP synthase family. As to quaternary structure, monomer.

The protein localises to the cytoplasm. The catalysed reaction is 3-phosphoshikimate + phosphoenolpyruvate = 5-O-(1-carboxyvinyl)-3-phosphoshikimate + phosphate. Its pathway is metabolic intermediate biosynthesis; chorismate biosynthesis; chorismate from D-erythrose 4-phosphate and phosphoenolpyruvate: step 6/7. Its function is as follows. Catalyzes the transfer of the enolpyruvyl moiety of phosphoenolpyruvate (PEP) to the 5-hydroxyl of shikimate-3-phosphate (S3P) to produce enolpyruvyl shikimate-3-phosphate and inorganic phosphate. This is 3-phosphoshikimate 1-carboxyvinyltransferase from Oceanobacillus iheyensis (strain DSM 14371 / CIP 107618 / JCM 11309 / KCTC 3954 / HTE831).